The following is a 139-amino-acid chain: Peptide methionine sulfoxide reductase MsrB (139 aa).

Positions 8-130 (DREWQRELSP…NSASLQLKTQ (123 aa)) constitute a MsrB domain. Zn(2+)-binding residues include C47, C50, C96, and C99. C119 acts as the Nucleophile in catalysis.

It belongs to the MsrB Met sulfoxide reductase family. It depends on Zn(2+) as a cofactor.

It carries out the reaction L-methionyl-[protein] + [thioredoxin]-disulfide + H2O = L-methionyl-(R)-S-oxide-[protein] + [thioredoxin]-dithiol. The protein is Peptide methionine sulfoxide reductase MsrB of Acinetobacter baumannii (strain AB307-0294).